The chain runs to 209 residues: Ribosomal RNA large subunit methyltransferase E (209 aa).

S-adenosyl-L-methionine-binding residues include glycine 63, tryptophan 65, aspartate 83, aspartate 99, and aspartate 124. Lysine 164 acts as the Proton acceptor in catalysis.

It belongs to the class I-like SAM-binding methyltransferase superfamily. RNA methyltransferase RlmE family.

Its subcellular location is the cytoplasm. It catalyses the reaction uridine(2552) in 23S rRNA + S-adenosyl-L-methionine = 2'-O-methyluridine(2552) in 23S rRNA + S-adenosyl-L-homocysteine + H(+). Functionally, specifically methylates the uridine in position 2552 of 23S rRNA at the 2'-O position of the ribose in the fully assembled 50S ribosomal subunit. The chain is Ribosomal RNA large subunit methyltransferase E from Serratia proteamaculans (strain 568).